We begin with the raw amino-acid sequence, 109 residues long: Small ribosomal subunit protein bS6 (109 aa).

Belongs to the bacterial ribosomal protein bS6 family.

Binds together with bS18 to 16S ribosomal RNA. The protein is Small ribosomal subunit protein bS6 of Dehalococcoides mccartyi (strain ATCC BAA-2266 / KCTC 15142 / 195) (Dehalococcoides ethenogenes (strain 195)).